Consider the following 173-residue polypeptide: uncharacterized protein (173 aa).

A signal peptide spans 1–25 (MPVVTAVGRRRGFAMPWVSTARSGA).

This is an uncharacterized protein from Mycobacterium bovis (strain ATCC BAA-935 / AF2122/97).